Reading from the N-terminus, the 75-residue chain is Small ribosomal subunit protein bS18 (75 aa).

Belongs to the bacterial ribosomal protein bS18 family. Part of the 30S ribosomal subunit. Forms a tight heterodimer with protein bS6.

Functionally, binds as a heterodimer with protein bS6 to the central domain of the 16S rRNA, where it helps stabilize the platform of the 30S subunit. The polypeptide is Small ribosomal subunit protein bS18 (Acinetobacter baylyi (strain ATCC 33305 / BD413 / ADP1)).